Consider the following 483-residue polypeptide: MNYGLTHTPSLTMSECLVLGVFSDLALPDFATAIDNEQKGLIKKLCQRVPEPGNTVWQTDVEGHSLLIIQCGKKEEFSANSLQKRVGEITEALIKQRFSSATVCLPRLNQESAEWQLEQMIVQIDNLRYQLLDFKTKHAKSHKLESVIFHLPGATEKSLEMAKAIVTGVEFCRDLANMPANICTPTYLGEQAISLSKQFDQISCQVMGPEEIKEMGMGALLAVAQGSDQPPRLIDIHYHGNKNSTPVILVGKGITFDSGGLSIKPANAMDEMKYDMSGAASVLGVIKACALLKLPINLIGIIASAENLISGSAVKSGDIVTTMSGQTVEIINTDAEGRLVLADALTYAERYNPDFVIDIATLTGAIIVALGNIATGYMTRDEQLAKSIERAANESQDKVWRMPLDEAYQDALESPLADMINAGFDRSAGSITAACFLSRFTEKYRWAHLDIAGTAWISGKKRNATGRPVPLLIQLLRHVANSR.

Mn(2+)-binding residues include Lys-252 and Asp-257. Lys-264 is an active-site residue. Mn(2+) is bound by residues Asp-275, Asp-334, and Glu-336. Arg-338 is a catalytic residue.

It belongs to the peptidase M17 family. Requires Mn(2+) as cofactor.

It is found in the cytoplasm. It carries out the reaction Release of an N-terminal amino acid, Xaa-|-Yaa-, in which Xaa is preferably Leu, but may be other amino acids including Pro although not Arg or Lys, and Yaa may be Pro. Amino acid amides and methyl esters are also readily hydrolyzed, but rates on arylamides are exceedingly low.. It catalyses the reaction Release of an N-terminal amino acid, preferentially leucine, but not glutamic or aspartic acids.. In terms of biological role, presumably involved in the processing and regular turnover of intracellular proteins. Catalyzes the removal of unsubstituted N-terminal amino acids from various peptides. The sequence is that of Probable cytosol aminopeptidase from Legionella pneumophila (strain Corby).